The chain runs to 865 residues: cGMP-specific 3',5'-cyclic phosphodiesterase (865 aa).

Phosphoserine is present on Ser-92. GAF domains follow at residues 154 to 304 (DVTA…GIVL) and 336 to 493 (SLEV…GLGI). Residues 526–850 (ETRELQALSA…QKWQALAEQQ (325 aa)) form the PDEase domain. His-603 acts as the Proton donor in catalysis. Positions 607, 643, 644, and 754 each coordinate Zn(2+). Mg(2+) is bound at residue Asp-644. Residue Gln-807 coordinates 3',5'-cyclic GMP.

This sequence belongs to the cyclic nucleotide phosphodiesterase family. Zn(2+) is required as a cofactor. Mg(2+) serves as cofactor. Phosphorylation is regulated by binding of cGMP to the two allosteric sites. Phosphorylation by PRKG1 leads to its activation.

The enzyme catalyses 3',5'-cyclic GMP + H2O = GMP + H(+). It functions in the pathway purine metabolism; 3',5'-cyclic GMP degradation; GMP from 3',5'-cyclic GMP: step 1/1. Functionally, plays a role in signal transduction by regulating the intracellular concentration of cyclic nucleotides. This phosphodiesterase catalyzes the specific hydrolysis of cGMP to 5'-GMP. Specifically regulates nitric-oxide-generated cGMP. This Mus musculus (Mouse) protein is cGMP-specific 3',5'-cyclic phosphodiesterase (Pde5a).